The chain runs to 219 residues: Endo-type membrane-bound lytic murein transglycosylase A-like protein (219 aa).

The protein belongs to the transglycosylase Slt family.

The catalysed reaction is Endolytic cleavage of the (1-&gt;4)-beta-glycosidic linkage between N-acetylmuramic acid (MurNAc) and N-acetylglucosamine (GlcNAc) residues in peptidoglycan with concomitant formation of a 1,6-anhydrobond in the MurNAc residue.. In terms of biological role, murein-degrading enzyme. May play a role in recycling of muropeptides during cell elongation and/or cell division (Potential). The sequence is that of Endo-type membrane-bound lytic murein transglycosylase A-like protein from Shigella flexneri.